The following is a 310-amino-acid chain: Acetylglutamate kinase (310 aa).

Substrate-binding positions include 74–75, Arg-96, and Asn-201; that span reads GG.

Belongs to the acetylglutamate kinase family. ArgB subfamily.

Its subcellular location is the cytoplasm. It catalyses the reaction N-acetyl-L-glutamate + ATP = N-acetyl-L-glutamyl 5-phosphate + ADP. It participates in amino-acid biosynthesis; L-arginine biosynthesis; N(2)-acetyl-L-ornithine from L-glutamate: step 2/4. Its function is as follows. Catalyzes the ATP-dependent phosphorylation of N-acetyl-L-glutamate. The chain is Acetylglutamate kinase from Arthrobacter sp. (strain FB24).